We begin with the raw amino-acid sequence, 357 residues long: Protein RecA (357 aa).

71–78 (GPESSGKT) provides a ligand contact to ATP.

Belongs to the RecA family.

Its subcellular location is the cytoplasm. Can catalyze the hydrolysis of ATP in the presence of single-stranded DNA, the ATP-dependent uptake of single-stranded DNA by duplex DNA, and the ATP-dependent hybridization of homologous single-stranded DNAs. It interacts with LexA causing its activation and leading to its autocatalytic cleavage. This Ehrlichia ruminantium (strain Gardel) protein is Protein RecA.